The chain runs to 236 residues: Alpha-acetolactate decarboxylase (236 aa).

The protein belongs to the alpha-acetolactate decarboxylase family.

It carries out the reaction (2S)-2-acetolactate + H(+) = (R)-acetoin + CO2. Its pathway is polyol metabolism; (R,R)-butane-2,3-diol biosynthesis; (R,R)-butane-2,3-diol from pyruvate: step 2/3. Functionally, converts acetolactate into acetoin. The polypeptide is Alpha-acetolactate decarboxylase (aldB) (Lactococcus lactis subsp. lactis (strain IL1403) (Streptococcus lactis)).